Consider the following 338-residue polypeptide: S-adenosylmethionine:tRNA ribosyltransferase-isomerase (338 aa).

It belongs to the QueA family. Monomer.

It localises to the cytoplasm. The enzyme catalyses 7-aminomethyl-7-carbaguanosine(34) in tRNA + S-adenosyl-L-methionine = epoxyqueuosine(34) in tRNA + adenine + L-methionine + 2 H(+). Its pathway is tRNA modification; tRNA-queuosine biosynthesis. In terms of biological role, transfers and isomerizes the ribose moiety from AdoMet to the 7-aminomethyl group of 7-deazaguanine (preQ1-tRNA) to give epoxyqueuosine (oQ-tRNA). This Francisella tularensis subsp. holarctica (strain FTNF002-00 / FTA) protein is S-adenosylmethionine:tRNA ribosyltransferase-isomerase.